The chain runs to 85 residues: Elongation factor 1-beta (85 aa).

This sequence belongs to the EF-1-beta/EF-1-delta family.

Promotes the exchange of GDP for GTP in EF-1-alpha/GDP, thus allowing the regeneration of EF-1-alpha/GTP that could then be used to form the ternary complex EF-1-alpha/GTP/AAtRNA. In Methanoregula boonei (strain DSM 21154 / JCM 14090 / 6A8), this protein is Elongation factor 1-beta.